A 485-amino-acid chain; its full sequence is Pentatricopeptide repeat-containing protein At1g62720 (485 aa).

PPR repeat units lie at residues 68 to 102, 103 to 137, 138 to 172, 173 to 207, 208 to 242, 243 to 277, 278 to 312, 313 to 347, 348 to 378, 380 to 414, 415 to 449, and 450 to 484; these read SIVD…GIGH, DLYS…GYEP, DVVT…GFRP, DVVI…GVRA, DAVT…DIVP, NVIT…CVDP, DVFT…GCLP, DVVT…GLVG, DTIT…MDSR, NIRT…EIEL, DITT…GLKP, and DVVS…GLLP.

Belongs to the PPR family. P subfamily.

This is Pentatricopeptide repeat-containing protein At1g62720 from Arabidopsis thaliana (Mouse-ear cress).